Here is a 306-residue protein sequence, read N- to C-terminus: Serine/threonine-protein phosphatase PP-X homolog 4 (306 aa).

4 residues coordinate Mn(2+): Asp53, His55, Asp81, and Asn113. The active-site Proton donor is the His114. Positions 163 and 237 each coordinate Mn(2+).

It belongs to the PPP phosphatase family. PP-4 (PP-X) subfamily. Requires Mn(2+) as cofactor.

It carries out the reaction O-phospho-L-seryl-[protein] + H2O = L-seryl-[protein] + phosphate. The enzyme catalyses O-phospho-L-threonyl-[protein] + H2O = L-threonyl-[protein] + phosphate. In Paramecium tetraurelia, this protein is Serine/threonine-protein phosphatase PP-X homolog 4 (Ppx4).